We begin with the raw amino-acid sequence, 394 residues long: Argininosuccinate synthase (394 aa).

Residues 7 to 15 (AYSGGLDTS) and alanine 35 contribute to the ATP site. Residue tyrosine 85 participates in L-citrulline binding. Glycine 115 lines the ATP pocket. Residues threonine 117, asparagine 121, and aspartate 122 each contribute to the L-aspartate site. Asparagine 121 provides a ligand contact to L-citrulline. Positions 125, 174, 183, 258, and 270 each coordinate L-citrulline.

The protein belongs to the argininosuccinate synthase family. Type 1 subfamily. In terms of assembly, homotetramer.

Its subcellular location is the cytoplasm. The catalysed reaction is L-citrulline + L-aspartate + ATP = 2-(N(omega)-L-arginino)succinate + AMP + diphosphate + H(+). It participates in amino-acid biosynthesis; L-arginine biosynthesis; L-arginine from L-ornithine and carbamoyl phosphate: step 2/3. This is Argininosuccinate synthase from Methanopyrus kandleri (strain AV19 / DSM 6324 / JCM 9639 / NBRC 100938).